Here is a 442-residue protein sequence, read N- to C-terminus: UPF0489 protein C5orf22 (442 aa).

Positions 175–210 (SSAKKPKLALEDSENTASTNCDSSSEGLEKDTATQR) are disordered. Polar residues predominate over residues 189 to 200 (NTASTNCDSSSE).

It belongs to the UPF0489 family.

This Homo sapiens (Human) protein is UPF0489 protein C5orf22 (C5orf22).